Reading from the N-terminus, the 136-residue chain is Small ribosomal subunit protein uS8c (136 aa).

Belongs to the universal ribosomal protein uS8 family. Part of the 30S ribosomal subunit.

Its subcellular location is the plastid. It localises to the chloroplast. One of the primary rRNA binding proteins, it binds directly to 16S rRNA central domain where it helps coordinate assembly of the platform of the 30S subunit. The chain is Small ribosomal subunit protein uS8c (rps8) from Hordeum vulgare (Barley).